Consider the following 556-residue polypeptide: Formate--tetrahydrofolate ligase (556 aa).

65–72 (TPAGEGKS) is a binding site for ATP.

Belongs to the formate--tetrahydrofolate ligase family.

The catalysed reaction is (6S)-5,6,7,8-tetrahydrofolate + formate + ATP = (6R)-10-formyltetrahydrofolate + ADP + phosphate. It functions in the pathway one-carbon metabolism; tetrahydrofolate interconversion. The sequence is that of Formate--tetrahydrofolate ligase from Streptococcus thermophilus (strain ATCC BAA-491 / LMD-9).